A 209-amino-acid polypeptide reads, in one-letter code: ATP-dependent Clp protease proteolytic subunit (209 aa).

S101 acts as the Nucleophile in catalysis. The active site involves H126.

Belongs to the peptidase S14 family. In terms of assembly, component of the chloroplastic Clp protease core complex.

It is found in the plastid. Its subcellular location is the chloroplast stroma. The catalysed reaction is Hydrolysis of proteins to small peptides in the presence of ATP and magnesium. alpha-casein is the usual test substrate. In the absence of ATP, only oligopeptides shorter than five residues are hydrolyzed (such as succinyl-Leu-Tyr-|-NHMec, and Leu-Tyr-Leu-|-Tyr-Trp, in which cleavage of the -Tyr-|-Leu- and -Tyr-|-Trp bonds also occurs).. Cleaves peptides in various proteins in a process that requires ATP hydrolysis. Has a chymotrypsin-like activity. Plays a major role in the degradation of misfolded proteins. The protein is ATP-dependent Clp protease proteolytic subunit of Huperzia lucidula (Shining clubmoss).